Consider the following 311-residue polypeptide: N-acetylmuramic acid 6-phosphate etherase (311 aa).

The region spanning 66-229 is the SIS domain; the sequence is VAVRMARGGR…STITMIRLGK (164 aa). Glu-94 (proton donor) is an active-site residue. Glu-125 is a catalytic residue.

It belongs to the GCKR-like family. MurNAc-6-P etherase subfamily. In terms of assembly, homodimer.

It catalyses the reaction N-acetyl-D-muramate 6-phosphate + H2O = N-acetyl-D-glucosamine 6-phosphate + (R)-lactate. It functions in the pathway amino-sugar metabolism; N-acetylmuramate degradation. Its function is as follows. Specifically catalyzes the cleavage of the D-lactyl ether substituent of MurNAc 6-phosphate, producing GlcNAc 6-phosphate and D-lactate. This chain is N-acetylmuramic acid 6-phosphate etherase, found in Streptomyces coelicolor (strain ATCC BAA-471 / A3(2) / M145).